The chain runs to 285 residues: Octanoyltransferase (285 aa).

Residues 50–277 (LRTPDELWIV…NIAQRHAGDI (228 aa)) form the BPL/LPL catalytic domain. Residues 89–96 (RGGQVTWH), 189–191 (SLG), and 202–204 (GIA) contribute to the substrate site. The active-site Acyl-thioester intermediate is the C220.

Belongs to the LipB family.

Its subcellular location is the cytoplasm. It carries out the reaction octanoyl-[ACP] + L-lysyl-[protein] = N(6)-octanoyl-L-lysyl-[protein] + holo-[ACP] + H(+). The protein operates within protein modification; protein lipoylation via endogenous pathway; protein N(6)-(lipoyl)lysine from octanoyl-[acyl-carrier-protein]: step 1/2. Catalyzes the transfer of endogenously produced octanoic acid from octanoyl-acyl-carrier-protein onto the lipoyl domains of lipoate-dependent enzymes. Lipoyl-ACP can also act as a substrate although octanoyl-ACP is likely to be the physiological substrate. The polypeptide is Octanoyltransferase (Psychrobacter cryohalolentis (strain ATCC BAA-1226 / DSM 17306 / VKM B-2378 / K5)).